The chain runs to 103 residues: Large ribosomal subunit protein uL24 (103 aa).

This sequence belongs to the universal ribosomal protein uL24 family. In terms of assembly, part of the 50S ribosomal subunit.

Its function is as follows. One of two assembly initiator proteins, it binds directly to the 5'-end of the 23S rRNA, where it nucleates assembly of the 50S subunit. In terms of biological role, one of the proteins that surrounds the polypeptide exit tunnel on the outside of the subunit. The sequence is that of Large ribosomal subunit protein uL24 from Bacillus licheniformis (strain ATCC 14580 / DSM 13 / JCM 2505 / CCUG 7422 / NBRC 12200 / NCIMB 9375 / NCTC 10341 / NRRL NRS-1264 / Gibson 46).